Consider the following 344-residue polypeptide: Uroporphyrinogen decarboxylase (344 aa).

Substrate contacts are provided by residues 26–30 (RQAGR), F45, D75, Y151, S206, and H320.

This sequence belongs to the uroporphyrinogen decarboxylase family. As to quaternary structure, homodimer.

The protein localises to the cytoplasm. It carries out the reaction uroporphyrinogen III + 4 H(+) = coproporphyrinogen III + 4 CO2. Its pathway is porphyrin-containing compound metabolism; protoporphyrin-IX biosynthesis; coproporphyrinogen-III from 5-aminolevulinate: step 4/4. Its function is as follows. Catalyzes the decarboxylation of four acetate groups of uroporphyrinogen-III to yield coproporphyrinogen-III. The polypeptide is Uroporphyrinogen decarboxylase (Staphylococcus saprophyticus subsp. saprophyticus (strain ATCC 15305 / DSM 20229 / NCIMB 8711 / NCTC 7292 / S-41)).